The following is a 365-amino-acid chain: MEVKDIVFMNKGDGENSYVKSAGLTLKVIAKTQPMVQKAVQSLFKGTHSAPLQVVNVADLGCALGPQPLESMSIVIESIVEKCGELGCEMPEIQFHLNDLAGNDFNTLFKGLSVVQEKYKNVSWFAMGAPGSFHGRLFPRNSMHLVHSCYSVHWLSKAPKITSEEGLPLNKGKIYMSKTSPPAVKEAYLSQFEEDFSSVLRFRSPELAPDGRMVLILNGRQSADPTEKDICYLRDLLAEALSYLVSEGLIDEEKLGSFNVPYYNPSQEEVERVIDKEGSFTTEFSDTVVLEIGGKNAWSDPGLRIKGYRCFSEPVLSHQFGEEVMDKLFDKAEEILAEDYKQGKEATKNISIVVVLKKKTNQTWT.

Tyr18 is a binding site for S-adenosyl-L-homocysteine. Thr25 is a theobromine binding site. Residues Cys62, Gln67, Asp99, Leu100, Ser132, and Phe133 each contribute to the S-adenosyl-L-homocysteine site. Residues Tyr150, His153, and Trp154 each contribute to the theobromine site. Residues Asn170, Phe258, and Asn259 each contribute to the Mg(2+) site. Theobromine is bound at residue Phe311.

The protein belongs to the methyltransferase superfamily. Type-7 methyltransferase family. Requires Mg(2+) as cofactor.

The catalysed reaction is 7-methylxanthine + S-adenosyl-L-methionine = theobromine + S-adenosyl-L-homocysteine + H(+). The protein operates within alkaloid biosynthesis. Its function is as follows. Involved in the biosynthesis of theobromine. This Theobroma cacao (Cacao) protein is Probable 7-methylxanthine methyltransferase 3.